The following is a 196-amino-acid chain: ATP-dependent Clp protease proteolytic subunit (196 aa).

The active-site Nucleophile is Ser101. Residue His126 is part of the active site.

The protein belongs to the peptidase S14 family. Component of the chloroplastic Clp protease core complex.

The protein resides in the plastid. It localises to the chloroplast stroma. It carries out the reaction Hydrolysis of proteins to small peptides in the presence of ATP and magnesium. alpha-casein is the usual test substrate. In the absence of ATP, only oligopeptides shorter than five residues are hydrolyzed (such as succinyl-Leu-Tyr-|-NHMec, and Leu-Tyr-Leu-|-Tyr-Trp, in which cleavage of the -Tyr-|-Leu- and -Tyr-|-Trp bonds also occurs).. Functionally, cleaves peptides in various proteins in a process that requires ATP hydrolysis. Has a chymotrypsin-like activity. Plays a major role in the degradation of misfolded proteins. The protein is ATP-dependent Clp protease proteolytic subunit of Gossypium hirsutum (Upland cotton).